The chain runs to 414 residues: Cytochrome c biogenesis protein Ccs1 (414 aa).

The next 3 membrane-spanning stretches (helical) occupy residues 14–34 (LTVAIIILLAIALASALGTVI), 73–93 (SWWFIFLIILLLLSLTLCTIT), and 159–179 (VSPIIVHFSLVIVLIGSMLST).

Belongs to the Ccs1/CcsB family. As to quaternary structure, may interact with CcsA.

The protein localises to the plastid. It is found in the chloroplast thylakoid membrane. Required during biogenesis of c-type cytochromes (cytochrome c6 and cytochrome f) at the step of heme attachment. The sequence is that of Cytochrome c biogenesis protein Ccs1 from Guillardia theta (Cryptophyte).